The following is a 282-amino-acid chain: Cyclic AMP-dependent transcription factor ATF-5 (282 aa).

Positions 1–21 (MSLLATLGLELDRALLPASGL) are required for protein stabilization induced by IL1B. Lysine 29 is subject to N6-acetyllysine; by EP300. Disordered stretches follow at residues 116–152 (FLDA…DLPQ) and 173–238 (EEVG…ALEG). Positions 119 to 217 (APPLPPPSPP…GDRKQKKRDQ (99 aa)) are interaction with PTP4A1. The segment covering 120–140 (PPLPPPSPPPLPPPPLPPAPS) has biased composition (pro residues). Positions 141–150 (LPLSLPSFDL) are enriched in low complexity. Positions 178-194 (PPLPPPQQPPPPSPPQP) are enriched in pro residues. In terms of domain architecture, bZIP spans 208-271 (GDRKQKKRDQ…QYVKDLLIEV (64 aa)). The interval 210–230 (RKQKKRDQNKSAALRYRQRKR) is basic motif. Residues 236–250 (LEGECQGLEARNREL) form a leucine-zipper region. A Phosphoserine modification is found at serine 256.

It belongs to the bZIP family. Binds DNA as a dimer. Interacts with PTP4A1/PRL-1. Interacts with CCND3, but not with CCND1 or CCND2. Interacts with HSPA1A or HSPA1B; the interaction protects ATF5 from degradation via proteasome-dependent and caspase-dependent processes. Interacts (via C-terminal region) with NPM1 (via C-terminal region); the interaction leads to loss of association between HSPA1A or HSPA1B and ATF5 and promotes ATF5 degradation via proteasome-dependent and caspase-dependent processes. Interacts with NLK; the interaction stabilizes ATF5 at the protein level in a kinase-independent manner. Interacts with alpha-tubulin, gamma-tubulin members TUBGCP2 and TUBGCP4, PCNT; the ATF5:PCNT:polyglutamylated tubulin (PGT) tripartite unites the mother centriole and the pericentriolar material (PCM) in the centrosome. Interacts with CEBPB and EP300; EP300 is required for ATF5 and CEBPB interaction and DNA binding. Post-translationally, ubiquitinated by CDC34 and UBE2B in order to be degraded by the proteasome. Cisplatin inhibits ubiquitination and proteasome-mediated degradation by inhibiting the interaction with CDC34. Ubiquitination and degradation by the proteasome are inhibited by NLK in a kinase-independent manner. Phosphorylated by NLK, probably at Ser-92, Thr-94, Ser-126 and Ser-190. In terms of processing, acetylated at Lys-29 by EP300, the acetylation enhances the interaction with CEBPB, DNA-binding and transactivation activity. Widely expressed with higher expression levels in liver.

Its subcellular location is the cytoplasm. The protein localises to the nucleus. The protein resides in the cytoskeleton. It localises to the microtubule organizing center. It is found in the centrosome. In terms of biological role, transcription factor that either stimulates or represses gene transcription through binding of different DNA regulatory elements such as cAMP response element (CRE) (consensus: 5'-GTGACGT[AC][AG]-3'), ATF5-specific response element (ARE) (consensus: 5'-C[CT]TCT[CT]CCTT[AT]-3') but also the amino acid response element (AARE), present in many viral and cellular promoters. Critically involved, often in a cell type-dependent manner, in cell survival, proliferation, and differentiation. Its transcriptional activity is enhanced by CCND3 and slightly inhibited by CDK4. Important regulator of the cerebral cortex formation, functions in cerebral cortical neuroprogenitor cells to maintain proliferation and to block differentiation into neurons. Must be down-regulated in order for such cells to exit the cycle and differentiate. Participates in the pathways by which SHH promotes cerebellar granule neuron progenitor cells proliferation. Critical for survival of mature olfactory sensory neurons (OSN), directs expression of OSN-specific genes. May be involved in osteogenic differentiation. Promotes cell proliferation and survival by inducing the expression of EGR1 sinergistically with ELK1. Once acetylated by EP300, binds to ARE sequences on target genes promoters, such as BCL2 and EGR1. Plays an anti-apoptotic role through the transcriptional regulation of BCL2, this function seems to be cell type-dependent. Cooperates with NR1I3/CAR in the transcriptional activation of CYP2B6 in liver. In hepatic cells, represses CRE-dependent transcription and inhibits proliferation by blocking at G2/M phase. May act as a negative regulator of IL1B transduction pathway in liver. Upon IL1B stimulus, cooperates with NLK to activate the transactivation activity of C/EBP subfamily members. Besides its function of transcription factor, acts as a cofactor of CEBPB to activate CEBPA and promote adipocyte differentiation. Regulates centrosome dynamics in a cell-cycle- and centriole-age-dependent manner. Forms 9-foci symmetrical ring scaffold around the mother centriole to control centrosome function and the interaction between centrioles and pericentriolar material. The protein is Cyclic AMP-dependent transcription factor ATF-5 (ATF5) of Homo sapiens (Human).